A 394-amino-acid polypeptide reads, in one-letter code: Protein TsgA homolog (394 aa).

12 consecutive transmembrane segments (helical) span residues 11–31 (WISFFSYALTGALVIVTGMVM), 51–71 (FLNTGILVSIFLNAWLMEIIP), 76–96 (LVFGFILMILAIAGLMVGHNL), 101–121 (ACMFVLGVVSGITMSIGTFLI), 134–154 (LLFTDSFFSMAGMVFPIIAAT), 160–180 (VAWYWVYACIGVLYLAIFILT), 206–226 (IGVLFLSIAALCYILGQLGFI), 246–266 (GLVSNFWTAYMVGMWFFSVAL), 274–294 (IVTVLAALSTFMMYMFVSSQQ), 297–317 (MLSMYILGLGFVSSAIYTTLI), 334–354 (FILTCGTIGTMLTFVVTGPIV), and 363–383 (LATANGLYLVVFVMCVLLGFV).

This sequence belongs to the major facilitator superfamily. TsgA family.

It is found in the cell inner membrane. The sequence is that of Protein TsgA homolog from Edwardsiella ictaluri (strain 93-146).